The chain runs to 250 residues: Putative HTH-type transcriptional regulatory protein PAE1627 (250 aa).

Residues 129–183 (LRAKRQQAGLSLGTLATNLGVTRETVYRYERGEIEAPLKIAEKLINMFGEDITKK) enclose the HTH cro/C1-type domain. Residues 140-159 (LGTLATNLGVTRETVYRYER) constitute a DNA-binding region (H-T-H motif).

This chain is Putative HTH-type transcriptional regulatory protein PAE1627, found in Pyrobaculum aerophilum (strain ATCC 51768 / DSM 7523 / JCM 9630 / CIP 104966 / NBRC 100827 / IM2).